Reading from the N-terminus, the 462-residue chain is Spermatogenesis- and oogenesis-specific basic helix-loop-helix-containing protein 2 (462 aa).

Positions 200–251 constitute a bHLH domain; that stretch reads KASFLHSSKEKLRRERIKFCCEQLRTLLPYVKGRKSDVASVIEATVDYVKQV. The interval 422–462 is disordered; the sequence is PASSRTASSSIFRGFRESDSGHQASQQPTGPSLQPQDSSYF. The span at 442-462 shows a compositional bias: polar residues; that stretch reads GHQASQQPTGPSLQPQDSSYF.

The protein resides in the nucleus. In terms of biological role, probable transcription factor, which may be involved in spermatogenesis and oogenesis. The polypeptide is Spermatogenesis- and oogenesis-specific basic helix-loop-helix-containing protein 2 (Sohlh2) (Rattus norvegicus (Rat)).